We begin with the raw amino-acid sequence, 386 residues long: MASHQQCDTYAWFSQRAWVEIDLEALSHNVQQLKQFLSPRTQLMAVVKADAYGHGAVTVAQTALQAGASCLGVATVPEGIQLREAGIQAPILILGATHTPEQIQAIAQWQLQATIGSPKQALIFSNTLETIQHDSPIPVHIKLDTGMSRLGTNWQQAGEFVQLVERLPHLDIASVYSHLATADSPDPGIMEEQHRRFEEAIAQIKTLGIKIPSLHLANSAATLADPRLHYDMVRVGLAVYGLYPAPHLQNKISLKPVIQVQARITHVKTIAAGTGVSYGHQFIAPHEMRLAVVSIGYADGVPRNLSNKMQVLIRGQRVPQIGAITMDQLMIDASALPDLQEGEIVTLLGKQGKEKITADDWAEALNTISWEVLCGFKHRLPRVGVM.

Catalysis depends on K48, which acts as the Proton acceptor; specific for D-alanine. K48 is subject to N6-(pyridoxal phosphate)lysine. Residue R149 participates in substrate binding. The active-site Proton acceptor; specific for L-alanine is Y278. M326 provides a ligand contact to substrate.

The protein belongs to the alanine racemase family. The cofactor is pyridoxal 5'-phosphate.

The enzyme catalyses L-alanine = D-alanine. Its pathway is amino-acid biosynthesis; D-alanine biosynthesis; D-alanine from L-alanine: step 1/1. Functionally, catalyzes the interconversion of L-alanine and D-alanine. May also act on other amino acids. This is Alanine racemase (alr) from Nostoc sp. (strain PCC 7120 / SAG 25.82 / UTEX 2576).